The following is a 423-amino-acid chain: MGNTVAMILAGGQGTRLGVLTERIAKPAVPFGGKYRLIDFTLSNCVNSGIYRVGVLTQYRPHVLSKHIGIGRPWDLDRKDGGVEILPPYVGRHESDWYKGTANAVYQNLEFLEENDAELVLILSGDHVYAMNYNDLIDYHLLKEADGTIACMEVPIEEASRFGIMITDVDGRIVDFEEKPAKPRSNLASLGIYVFNYEFLKKVLIEDENDPNSSHDFGKDVIPRILRENLGSLYAFRFDGYWRDVGTLRSYWEANLELVLPVPPFNLYDPNWRFFTHTEEMPPAYVAPGSKVSTSLVSEGAEVYGNVFNSVIFQGVKIGRGTVVKNSVIMTRTEIGENCYLENVIIAENVKIGSNVRMGVGEDAESKLDPKVYSGLLTVVGMNSVIPDDMVIGKNCVIGIGVRPEDFKSKTLESGDYVIVREE.

Alpha-D-glucose 1-phosphate contacts are provided by residues Tyr-98, Gly-163, 178–179, and Ser-189; that span reads EK.

This sequence belongs to the bacterial/plant glucose-1-phosphate adenylyltransferase family. In terms of assembly, homotetramer.

The catalysed reaction is alpha-D-glucose 1-phosphate + ATP + H(+) = ADP-alpha-D-glucose + diphosphate. Its pathway is glycan biosynthesis; glycogen biosynthesis. Functionally, involved in the biosynthesis of ADP-glucose, a building block required for the elongation reactions to produce glycogen. Catalyzes the reaction between ATP and alpha-D-glucose 1-phosphate (G1P) to produce pyrophosphate and ADP-Glc. The sequence is that of Glucose-1-phosphate adenylyltransferase from Thermotoga maritima (strain ATCC 43589 / DSM 3109 / JCM 10099 / NBRC 100826 / MSB8).